A 332-amino-acid chain; its full sequence is Multiple virulence factor regulator MvfR (332 aa).

One can recognise an HTH lysR-type domain in the interval 4–61 (HNLNHVNMFLQVIASGSISSAARILRKSHTAVSSAVSNLEIDLCVELVRRDGYKVEPT). The H-T-H motif DNA-binding region spans 21–40 (ISSAARILRKSHTAVSSAVS).

This sequence belongs to the LysR transcriptional regulatory family. In terms of assembly, forms homooligomers.

The protein resides in the cell inner membrane. It localises to the secreted. Its activity is regulated as follows. Both 3,4-dihydroxy-2-heptylquinoline (PQS) and its precursor 4-hydroxy-2-heptylquinoline (HHQ) function as ligands and promote MvfR DNA-binding activity leading to transcriptional activation. In terms of biological role, transcription regulator that plays a critical role in virulence by positively regulating the expression of multiple quorum sensing (QS)-regulated virulence factors, genes involved in protein secretion, translation, response to oxidative stress and the phnAB operon. At the stationary phase, negatively autoregulates its function through cleavage and translocation to the extracellular space. The chain is Multiple virulence factor regulator MvfR from Pseudomonas aeruginosa (strain ATCC 15692 / DSM 22644 / CIP 104116 / JCM 14847 / LMG 12228 / 1C / PRS 101 / PAO1).